Reading from the N-terminus, the 486-residue chain is Sensor protein PhoQ (486 aa).

Over 1–16 the chain is Cytoplasmic; it reads MKKLLHLFFPLSLRVR. Residues 17 to 37 traverse the membrane as a helical segment; that stretch reads FLLATAAVVLVLSLAYGMVAL. Residues 38-194 lie on the Periplasmic side of the membrane; it reads IGYSVSFDKT…LKSSYMVWSW (157 aa). A divalent metal cation contacts are provided by Asp-151 and Asp-152. A helical membrane pass occupies residues 195 to 215; it reads FIYVLSANLLLVIPLLWVAAW. An HAMP domain is found at 215–266; it reads WWSLRPIEALAKEVRELEEHNRELLNPATTRELTSLVRNLNRLLKSERERYD. Residues 216 to 486 lie on the Cytoplasmic side of the membrane; that stretch reads WSLRPIEALA…GRQHSAPKDE (271 aa). Residues 274–480 enclose the Histidine kinase domain; sequence DLTHSLKTPL…RMEVIFGRQH (207 aa). Phosphohistidine; by autocatalysis is present on His-277. Asn-385 contacts Mg(2+). Residues 385–393, 415–420, and 434–446 each bind ATP; these read NVLDNACKY, DDGPGI, and RVDT…GVGL. Mg(2+) is bound at residue Gln-442.

In terms of assembly, homodimer.

Its subcellular location is the cell inner membrane. The catalysed reaction is ATP + protein L-histidine = ADP + protein N-phospho-L-histidine.. Functionally, member of the two-component regulatory system PhoP/PhoQ involved in virulence, adaptation to low Mg(2+) environments and the control of acid resistance genes. In low periplasmic Mg(2+), PhoQ functions as a membrane-associated protein kinase that undergoes autophosphorylation and subsequently transfers the phosphate to PhoP, resulting in the expression of PhoP-activated genes (PAG) and repression of PhoP-repressed genes (PRG). In high periplasmic Mg(2+), acts as a protein phosphatase that dephosphorylates phospho-PhoP, which results in the repression of PG and may lead to expression of some PRG. The sequence is that of Sensor protein PhoQ (phoQ) from Escherichia coli O6:H1 (strain CFT073 / ATCC 700928 / UPEC).